A 315-amino-acid polypeptide reads, in one-letter code: Transcription repressor OFP7 (315 aa).

The tract at residues 113–183 (YETPRRKIYN…ELPRVTRRPR (71 aa)) is disordered. Residues 130 to 145 (RRRLKKKEKSNSRRRG) are compositionally biased toward basic residues. Positions 160–174 (LPSSTNLSPEYSSSE) are enriched in polar residues. One can recognise an OVATE domain in the interval 230–289 (VVKKSEDPYEDFKGSMMEMIVEKKMFEVAELEQLLSCFLSLNAKRHHRAIVRAFSEIWVA).

Expressed in roots, shoots, stems, flower buds and siliques.

It is found in the nucleus. Transcriptional repressor that regulates multiple aspects of plant growth and development through the regulation of BEL1-LIKE (BLH) and KNOX TALE (KNAT) homeodomain transcription factors. The polypeptide is Transcription repressor OFP7 (OFP7) (Arabidopsis thaliana (Mouse-ear cress)).